An 84-amino-acid chain; its full sequence is Defensin-like protein 172 (84 aa).

Positions 1 to 23 are cleaved as a signal peptide; sequence MAKASSTLVLSIIFLVMFALVEQ. 4 disulfides stabilise this stretch: C27–C74, C34–C56, C40–C68, and C44–C70.

The protein belongs to the DEFL family.

It localises to the secreted. This Arabidopsis thaliana (Mouse-ear cress) protein is Defensin-like protein 172 (LCR60).